A 78-amino-acid polypeptide reads, in one-letter code: Protein M6 (78 aa).

Belongs to the A9/FIL1 family. In terms of tissue distribution, tapetum of anthers.

It is found in the secreted. This Lilium henryi (Henry's lily) protein is Protein M6 (M6).